We begin with the raw amino-acid sequence, 570 residues long: Pyruvate decarboxylase (570 aa).

Residues 1 to 2 (MV) constitute a propeptide, removed in mature form. Residues D33 and H120 each coordinate substrate. Residues 394 to 476 (DSWFNGIQLK…MLINNRGYTI (83 aa)) form a thiamine pyrophosphate binding region. 3 residues coordinate Mg(2+): D444, N471, and G473. E477 contacts substrate.

The protein belongs to the TPP enzyme family. Homomer. A metal cation serves as cofactor. Thiamine diphosphate is required as a cofactor.

The protein resides in the cytoplasm. The catalysed reaction is a 2-oxocarboxylate + H(+) = an aldehyde + CO2. The protein operates within carbohydrate metabolism; pyruvate metabolism. The chain is Pyruvate decarboxylase (cfp) from Neurospora crassa (strain ATCC 24698 / 74-OR23-1A / CBS 708.71 / DSM 1257 / FGSC 987).